A 218-amino-acid polypeptide reads, in one-letter code: Attacin-B (218 aa).

The N-terminal stretch at 1–17 is a signal peptide; the sequence is MQKTSILILALFAIAEA. The propeptide occupies 18–28; it reads VPTTGPIRVRR.

The protein belongs to the attacin/sarcotoxin-2 family. In terms of tissue distribution, hemolymph (at protein level).

The protein resides in the secreted. Its function is as follows. Hemolymph antibacterial protein. The sequence is that of Attacin-B (AttB) from Drosophila melanogaster (Fruit fly).